The following is a 359-amino-acid chain: Peptide chain release factor 1 (359 aa).

Q232 is modified (N5-methylglutamine).

This sequence belongs to the prokaryotic/mitochondrial release factor family. Post-translationally, methylated by PrmC. Methylation increases the termination efficiency of RF1.

The protein localises to the cytoplasm. Functionally, peptide chain release factor 1 directs the termination of translation in response to the peptide chain termination codons UAG and UAA. The polypeptide is Peptide chain release factor 1 (Lawsonia intracellularis (strain PHE/MN1-00)).